The sequence spans 164 residues: MTDTFWAFVGLVLFLALLAYFKVPEMIVHRLDARAKRIKDELDEALRLREEAQEVLAEYQRKHAEAEKDAQEIIAAAKREVEAVVSEARTKAEEYVKNRNKLAEQKIAQAEADAIRVVSSSAVDLAVSAARVLIEQELDSNKANELIKESLFEESLTKMKAYLN.

A helical transmembrane segment spans residues Thr4–Pro24.

Belongs to the ATPase B chain family. F-type ATPases have 2 components, F(1) - the catalytic core - and F(0) - the membrane proton channel. F(1) has five subunits: alpha(3), beta(3), gamma(1), delta(1), epsilon(1). F(0) has three main subunits: a(1), b(2) and c(10-14). The alpha and beta chains form an alternating ring which encloses part of the gamma chain. F(1) is attached to F(0) by a central stalk formed by the gamma and epsilon chains, while a peripheral stalk is formed by the delta and b chains.

The protein resides in the cell inner membrane. Functionally, f(1)F(0) ATP synthase produces ATP from ADP in the presence of a proton or sodium gradient. F-type ATPases consist of two structural domains, F(1) containing the extramembraneous catalytic core and F(0) containing the membrane proton channel, linked together by a central stalk and a peripheral stalk. During catalysis, ATP synthesis in the catalytic domain of F(1) is coupled via a rotary mechanism of the central stalk subunits to proton translocation. Component of the F(0) channel, it forms part of the peripheral stalk, linking F(1) to F(0). The protein is ATP synthase subunit b 2 of Bartonella quintana (strain Toulouse) (Rochalimaea quintana).